The primary structure comprises 73 residues: Putative ORF9c protein (73 aa).

The chain crosses the membrane as a helical span at residues 47–67 (AAVGELLLLEWLAMAVMLLLL).

Its subcellular location is the membrane. May induce apoptosis in cardiomyocytes when overexpressed ex-vivo. This is Putative ORF9c protein from Homo sapiens (Human).